Reading from the N-terminus, the 358-residue chain is Type II restriction enzyme CviJI (358 aa).

Requires Mg(2+) as cofactor.

It carries out the reaction Endonucleolytic cleavage of DNA to give specific double-stranded fragments with terminal 5'-phosphates.. A P subtype restriction enzyme that recognizes the double-stranded sequence 5'-RGCY-3' and cleaves after G-2. In the presence of ATP, there is a relaxation of its specificity and it can cleave 5'-RGCN-3' and 5'-YGCY-3', but not 5'-YGCR-3' (R.CviJI* activity). The protein is Type II restriction enzyme CviJI of Paramecium bursaria Chlorella virus IL3A (PBCV-IL3A).